Reading from the N-terminus, the 141-residue chain is Lysozyme 1 (141 aa).

The N-terminal stretch at 1–19 (MKFFIVLVAALALAAPAMG) is a signal peptide. The region spanning 20-141 (KTFTRCSLAR…GSLPSINDCF (122 aa)) is the C-type lysozyme domain. 4 disulfide bridges follow: Cys-25–Cys-140, Cys-46–Cys-130, Cys-81–Cys-97, and Cys-93–Cys-111. Glu-51 is a catalytic residue. A glycan (N-linked (GlcNAc...) asparagine) is linked at Asn-65. The active site involves Asp-69. An N-linked (GlcNAc...) asparagine glycan is attached at Asn-104.

It belongs to the glycosyl hydrolase 22 family.

The catalysed reaction is Hydrolysis of (1-&gt;4)-beta-linkages between N-acetylmuramic acid and N-acetyl-D-glucosamine residues in a peptidoglycan and between N-acetyl-D-glucosamine residues in chitodextrins.. Its function is as follows. May not function as a self-defense protein, but as a digestive enzyme, probably in the gut of the insect body. Inactive towards Micrococcus luteus. Active toward glycol chitin. This Musca domestica (House fly) protein is Lysozyme 1.